We begin with the raw amino-acid sequence, 262 residues long: 3-methyl-2-oxobutanoate hydroxymethyltransferase (262 aa).

Residues aspartate 42 and aspartate 81 each coordinate Mg(2+). 3-methyl-2-oxobutanoate contacts are provided by residues 42–43, aspartate 81, and lysine 110; that span reads DS. Glutamate 112 contacts Mg(2+). Residue glutamate 180 is the Proton acceptor of the active site.

This sequence belongs to the PanB family. In terms of assembly, homodecamer; pentamer of dimers. It depends on Mg(2+) as a cofactor.

Its subcellular location is the cytoplasm. The catalysed reaction is 3-methyl-2-oxobutanoate + (6R)-5,10-methylene-5,6,7,8-tetrahydrofolate + H2O = 2-dehydropantoate + (6S)-5,6,7,8-tetrahydrofolate. The protein operates within cofactor biosynthesis; (R)-pantothenate biosynthesis; (R)-pantoate from 3-methyl-2-oxobutanoate: step 1/2. Catalyzes the reversible reaction in which hydroxymethyl group from 5,10-methylenetetrahydrofolate is transferred onto alpha-ketoisovalerate to form ketopantoate. The polypeptide is 3-methyl-2-oxobutanoate hydroxymethyltransferase (Legionella pneumophila (strain Lens)).